The primary structure comprises 485 residues: Peptidyl-prolyl isomerase CWC27 (485 aa).

The region spanning 11 to 167 (SSGLVDLVTS…YPIKLHEVRV (157 aa)) is the PPIase cyclophilin-type domain. The disordered stretch occupies residues 173–485 (DDLQPRTTKK…PQQRRQRSII (313 aa)). Basic and acidic residues-rich tracts occupy residues 184–204 (RIAE…EEQK) and 236–247 (SSHDLLKDDKHL). Polar residues-rich tracts occupy residues 249–270 (RQTI…ANIS), 278–292 (AQSS…VTKQ), 315–325 (PSDQKASSSTG), and 353–370 (ALLS…STTP). Residues 381–398 (DEVEEEAGEYGASDDDDD) are compositionally biased toward acidic residues. The segment covering 428-465 (LDPRDHTDRERNPKAESSRDGKRGRDWVEHDRKYQNDR) has biased composition (basic and acidic residues). The segment covering 466–485 (SRRHREHDKHPQQRRQRSII) has biased composition (basic residues).

It belongs to the cyclophilin-type PPIase family. CWC27 subfamily. In terms of assembly, associated with the spliceosome.

It localises to the cytoplasm. Its subcellular location is the nucleus. It catalyses the reaction [protein]-peptidylproline (omega=180) = [protein]-peptidylproline (omega=0). Its function is as follows. PPIases accelerate the folding of proteins. It catalyzes the cis-trans isomerization of proline imidic peptide bonds in oligopeptides. Involved in pre-mRNA splicing. This Mycosarcoma maydis (Corn smut fungus) protein is Peptidyl-prolyl isomerase CWC27 (CWC27).